Here is a 302-residue protein sequence, read N- to C-terminus: tRNA pseudouridine synthase B (302 aa).

Asp-47 serves as the catalytic Nucleophile.

The protein belongs to the pseudouridine synthase TruB family. Type 1 subfamily.

It carries out the reaction uridine(55) in tRNA = pseudouridine(55) in tRNA. Functionally, responsible for synthesis of pseudouridine from uracil-55 in the psi GC loop of transfer RNAs. The protein is tRNA pseudouridine synthase B of Methylobacillus flagellatus (strain ATCC 51484 / DSM 6875 / VKM B-1610 / KT).